Here is a 132-residue protein sequence, read N- to C-terminus: Myelin P2 protein (132 aa).

S2 carries the post-translational modification N-acetylserine. Residues R107 and 127–129 (RIY) contribute to the (9Z)-octadecenoate site. Hexadecanoate contacts are provided by residues R107 and 127–129 (RIY).

Belongs to the calycin superfamily. Fatty-acid binding protein (FABP) family. Monomer.

It localises to the cytoplasm. Its function is as follows. May play a role in lipid transport protein in Schwann cells. May bind cholesterol. In Mus musculus (Mouse), this protein is Myelin P2 protein (Pmp2).